The sequence spans 544 residues: MAKLIEFNIEARRGLEAGMNTLADAVKVTLGPKGRNVVLEKSWGAPTITNDGVSIAKEIELDDPYEKIGAELVKEVAKKTDDVAGDGTTTATVLAQAMVREGLRNVTAGANPMGLKKGIEAAVQAVSARLSDMAIDIETKDQIASTASISAADPTVGEIIAEAMDKVGKEGVITVEESNTFGLELELTEGMRFDKGYISPYFVTDTERMEAVLEDPYILIVNSKISSLKDLLPVLEKVMQSGKPLFVIAEDVEGEALAGLIVNKIRGTFKSVAVKAPGFGDRRKAMLNDIAILTGGQVISEEVGLSLDAVTLDLLGRARQVVVTKDEATIVDGAGDSEQIAGRVSQIRKEIENSDSDYDREKLQERLAKLAGGVAVIKVGAATEVELKERKHRIEDAVRNAKAAVEEGIIPGGGVALLQASKAAEIEGLEGDELTGAQIVLAACTAPLKQIAINAGLEGGVVAEKVAGLPAGQGLNAANDEYVDMVEAGIIDPAKVTRSALQNAASIAALFLTTEAVIADKPEPVKAPAGGGDMDGMGGMGGMM.

ATP is bound by residues threonine 29–proline 32, aspartate 86–threonine 90, glycine 413, asparagine 476–alanine 478, and aspartate 492. The interval glutamate 523–methionine 544 is disordered. A compositionally biased stretch (gly residues) spans alanine 529 to methionine 544.

The protein belongs to the chaperonin (HSP60) family. As to quaternary structure, forms a cylinder of 14 subunits composed of two heptameric rings stacked back-to-back. Interacts with the co-chaperonin GroES.

The protein localises to the cytoplasm. The catalysed reaction is ATP + H2O + a folded polypeptide = ADP + phosphate + an unfolded polypeptide.. Together with its co-chaperonin GroES, plays an essential role in assisting protein folding. The GroEL-GroES system forms a nano-cage that allows encapsulation of the non-native substrate proteins and provides a physical environment optimized to promote and accelerate protein folding. This chain is Chaperonin GroEL 1, found in Cutibacterium acnes (strain DSM 16379 / KPA171202) (Propionibacterium acnes).